Consider the following 123-residue polypeptide: Secreted RxLR effector protein RXLR-C21 (123 aa).

Residues 1–23 form the signal peptide; it reads MRLHLLVLSVIVVSLLVSDNAHA. Positions 32-65 match the RxLR-dEER motif; sequence RALRETPINGLVTNQLAVSRNLTPAKFITNSEER. Residues 101 to 121 form a helical membrane-spanning segment; the sequence is VTTICSIVLFVMVFGCLYKIF.

Belongs to the RxLR effector family.

The protein localises to the secreted. It localises to the host endoplasmic reticulum membrane. Functionally, secreted effector that does not suppress pattern-triggered immunity (PTI) in plant host. The protein is Secreted RxLR effector protein RXLR-C21 of Plasmopara halstedii (Downy mildew of sunflower).